The primary structure comprises 123 residues: Cytochrome c-555 (123 aa).

A signal peptide spans 1 to 27 (MDHKKTSIRTTALAALVLGAVAAPAFS). Positions 46, 49, 50, and 86 each coordinate heme c.

In terms of processing, binds 1 heme c group covalently per subunit.

This chain is Cytochrome c-555, found in Methylococcus capsulatus (strain ATCC 33009 / NCIMB 11132 / Bath).